The primary structure comprises 197 residues: Elongation factor Ts (197 aa).

Residues 81 to 84 (TDFV) form an involved in Mg(2+) ion dislocation from EF-Tu region.

Belongs to the EF-Ts family.

It is found in the cytoplasm. Its function is as follows. Associates with the EF-Tu.GDP complex and induces the exchange of GDP to GTP. It remains bound to the aminoacyl-tRNA.EF-Tu.GTP complex up to the GTP hydrolysis stage on the ribosome. The polypeptide is Elongation factor Ts (Persephonella marina (strain DSM 14350 / EX-H1)).